A 496-amino-acid chain; its full sequence is Probable cytosol aminopeptidase (496 aa).

Positions 252 and 257 each coordinate Mn(2+). The active site involves lysine 264. Aspartate 275, aspartate 334, and glutamate 336 together coordinate Mn(2+). Arginine 338 is a catalytic residue.

It belongs to the peptidase M17 family. It depends on Mn(2+) as a cofactor.

Its subcellular location is the cytoplasm. It carries out the reaction Release of an N-terminal amino acid, Xaa-|-Yaa-, in which Xaa is preferably Leu, but may be other amino acids including Pro although not Arg or Lys, and Yaa may be Pro. Amino acid amides and methyl esters are also readily hydrolyzed, but rates on arylamides are exceedingly low.. The catalysed reaction is Release of an N-terminal amino acid, preferentially leucine, but not glutamic or aspartic acids.. Functionally, presumably involved in the processing and regular turnover of intracellular proteins. Catalyzes the removal of unsubstituted N-terminal amino acids from various peptides. This Leifsonia xyli subsp. xyli (strain CTCB07) protein is Probable cytosol aminopeptidase.